Reading from the N-terminus, the 89-residue chain is Small ribosomal subunit protein uS15 (89 aa).

The protein belongs to the universal ribosomal protein uS15 family. As to quaternary structure, part of the 30S ribosomal subunit. Forms a bridge to the 50S subunit in the 70S ribosome, contacting the 23S rRNA.

In terms of biological role, one of the primary rRNA binding proteins, it binds directly to 16S rRNA where it helps nucleate assembly of the platform of the 30S subunit by binding and bridging several RNA helices of the 16S rRNA. Its function is as follows. Forms an intersubunit bridge (bridge B4) with the 23S rRNA of the 50S subunit in the ribosome. The sequence is that of Small ribosomal subunit protein uS15 from Listeria innocua serovar 6a (strain ATCC BAA-680 / CLIP 11262).